Consider the following 197-residue polypeptide: UPF0228 protein MA_3125 (197 aa).

This sequence belongs to the UPF0228 family.

This Methanosarcina acetivorans (strain ATCC 35395 / DSM 2834 / JCM 12185 / C2A) protein is UPF0228 protein MA_3125.